The chain runs to 782 residues: Glucocorticoid receptor (782 aa).

The tract at residues 1-20 (MDPKESLTPPSREEIPSSVL) is disordered. Residues 1-425 (MDPKESLTPP…SAATGPPPKL (425 aa)) are modulating. Thr8 bears the Phosphothreonine mark. Residue Arg24 is modified to Omega-N-methylarginine. Ser46 carries the post-translational modification Phosphoserine. The interval 48–79 (SLAAVSQPDSKQQRLAVDFPKGSGSNAQQPDL) is disordered. 6 positions are modified to phosphoserine: Ser114, Ser135, Ser142, Ser208, Ser216, and Ser231. The tract at residues 130-184 (LSRSTSVPENPKSSASAAGPAAPAEKAFPKTHSDGAPEQPNVKGQTGTNGGNVKL) is disordered. Residues 140–155 (PKSSASAAGPAAPAEK) are compositionally biased toward low complexity. Lys263 participates in a covalent cross-link: Glycyl lysine isopeptide (Lys-Gly) (interchain with G-Cter in SUMO2). Ser272 carries the phosphoserine modification. Residues Lys282 and Lys298 each participate in a glycyl lysine isopeptide (Lys-Gly) (interchain with G-Cter in SUMO); alternate cross-link. Residues Lys282 and Lys298 each participate in a glycyl lysine isopeptide (Lys-Gly) (interchain with G-Cter in SUMO2); alternate cross-link. Phosphoserine occurs at positions 312 and 410. Lys424 is covalently cross-linked (Glycyl lysine isopeptide (Lys-Gly) (interchain with G-Cter in ubiquitin)). NR C4-type zinc fingers lie at residues 426-446 (CLVC…CGSC) and 462-486 (CAGR…YRKC). The segment at residues 426–491 (CLVCSDEASG…RYRKCLQAGM (66 aa)) is a DNA-binding region (nuclear receptor). N6-acetyllysine is present on residues Lys485, Lys497, Lys499, and Lys500. The tract at residues 490 to 782 (GMNLEARKTK…NIKKLLFHQK (293 aa)) is interaction with CLOCK. The hinge stretch occupies residues 492–528 (NLEARKTKKKIKGIQQATTGVSQETSENSANKTIVPA). An NR LBD domain is found at 529 to 763 (TLPQLTPTLV…FPEMLAEIIT (235 aa)). Residues 537-702 (LVSLLEVIEP…EIRMTYIKEL (166 aa)) are interaction with CRY1. Residue Lys708 forms a Glycyl lysine isopeptide (Lys-Gly) (interchain with G-Cter in SUMO) linkage.

Belongs to the nuclear hormone receptor family. NR3 subfamily. In terms of assembly, heteromultimeric cytoplasmic complex with HSP90AA1, HSPA1A/HSPA1B, and FKBP5 or another immunophilin such as PPID, STIP1, or the immunophilin homolog PPP5C. Upon ligand binding FKBP5 dissociates from the complex and FKBP4 takes its place, thereby linking the complex to dynein and mediating transport to the nucleus, where the complex dissociates. Probably forms a complex composed of chaperones HSP90 and HSP70, co-chaperones CDC37, PPP5C, TSC1 and client protein TSC2, CDK4, AKT, RAF1 and NR3C1; this complex does not contain co-chaperones STIP1/HOP and PTGES3/p23. Directly interacts with UNC45A. Binds to DNA as a homodimer, and as heterodimer with NR3C2 or the retinoid X receptor. Binds STAT5A and STAT5B homodimers and heterodimers. Interacts with NRIP1, POU2F1, POU2F2 and TRIM28. Interacts with several coactivator complexes, including the SMARCA4 complex, CREBBP/EP300, TADA2L (Ada complex) and p160 coactivators such as NCOA2 and NCOA6. Interaction with BAG1 inhibits transactivation. Interacts with HEXIM1 and TGFB1I1. Interacts with NCOA1. Interacts with NCOA3, SMARCA4, SMARCC1, SMARCD1, and SMARCE1. Interacts with CLOCK, CRY1 and CRY2 in a ligand-dependent fashion. Interacts with CIART. Interacts with RWDD3. Interacts with UBE2I/UBC9 and this interaction is enhanced in the presence of RWDD3. Interacts with GRIP1. Interacts with NR4A3 (via nuclear receptor DNA-binding domain), represses transcription activity of NR4A3 on the POMC promoter Nur response element (NurRE). Directly interacts with PNRC2 to attract and form a complex with UPF1 and DCP1A; the interaction leads to rapid mRNA degradation. Interacts with GSK3B. Interacts with FNIP1 and FNIP2. Interacts (via C-terminus) with HNRNPU (via C-terminus). Interacts with MCM3AP. Interacts (via domain NR LBD) with HSP90AA1 and HSP90AB1. In the absence of hormonal ligand, interacts with TACC1. Interacts (via NR LBD domain) with ZNF764 (via KRAB domain); the interaction regulates transcription factor activity of NR3C1 by directing its actions toward certain biologic pathways. Post-translationally, acetylation by CLOCK reduces its binding to glucocorticoid response elements and its transcriptional activity. Increased proteasome-mediated degradation in response to glucocorticoids. In terms of processing, phosphorylated in the absence of hormone; becomes hyperphosphorylated in the presence of glucocorticoid. The Ser-208, Ser-231 and Ser-410-phosphorylated forms are mainly cytoplasmic, and the Ser-216-phosphorylated form is nuclear. Phosphorylation at Ser-216 increases transcriptional activity. Phosphorylation at Ser-208, Ser-231 and Ser-410 decreases signaling capacity. Phosphorylation at Ser-410 may protect from glucocorticoid-induced apoptosis. Phosphorylation at Ser-208 and Ser-216 is not required in regulation of chromosome segregation. May be dephosphorylated by PPP5C, attenuates NR3C1 action. Post-translationally, ubiquitinated by UBR5, leading to its degradation: UBR5 specifically recognizes and binds ligand-bound NR3C1 when it is not associated with coactivators (NCOAs). In presence of NCOAs, the UBR5-degron is not accessible, preventing its ubiquitination and degradation. Sumoylation at Lys-282 and Lys-298 negatively regulates its transcriptional activity. Sumoylation at Lys-708 positively regulates its transcriptional activity in the presence of RWDD3. Sumoylation at Lys-282 and Lys-298 is dispensable whereas sumoylation at Lys-708 is critical for the stimulatory effect of RWDD3 on its transcriptional activity. Heat shock increases sumoylation in a RWDD3-dependent manner.

The protein localises to the cytoplasm. Its subcellular location is the nucleus. It is found in the mitochondrion. It localises to the cytoskeleton. The protein resides in the spindle. The protein localises to the microtubule organizing center. Its subcellular location is the centrosome. It is found in the chromosome. It localises to the nucleoplasm. Functionally, receptor for glucocorticoids (GC). Has a dual mode of action: as a transcription factor that binds to glucocorticoid response elements (GRE), both for nuclear and mitochondrial DNA, and as a modulator of other transcription factors. Affects inflammatory responses, cellular proliferation and differentiation in target tissues. Involved in chromatin remodeling. Plays a role in rapid mRNA degradation by binding to the 5' UTR of target mRNAs and interacting with PNRC2 in a ligand-dependent manner which recruits the RNA helicase UPF1 and the mRNA-decapping enzyme DCP1A, leading to RNA decay. Could act as a coactivator for STAT5-dependent transcription upon growth hormone (GH) stimulation and could reveal an essential role of hepatic GR in the control of body growth. Mediates glucocorticoid-induced apoptosis. Promotes accurate chromosome segregation during mitosis. May act as a tumor suppressor. May play a negative role in adipogenesis through the regulation of lipolytic and antilipogenic gene expression. The protein is Glucocorticoid receptor (NR3C1) of Sus scrofa (Pig).